Reading from the N-terminus, the 339-residue chain is DNA-directed RNA polymerase subunit alpha (339 aa).

An alpha N-terminal domain (alpha-NTD) region spans residues 1-235 (MVIQKNWQEL…DQLQIFVNFE (235 aa)). Residues 251-339 (FNPALLKKVD…DLAKRFEEHY (89 aa)) are alpha C-terminal domain (alpha-CTD).

This sequence belongs to the RNA polymerase alpha chain family. Homodimer. The RNAP catalytic core consists of 2 alpha, 1 beta, 1 beta' and 1 omega subunit. When a sigma factor is associated with the core the holoenzyme is formed, which can initiate transcription.

It carries out the reaction RNA(n) + a ribonucleoside 5'-triphosphate = RNA(n+1) + diphosphate. In terms of biological role, DNA-dependent RNA polymerase catalyzes the transcription of DNA into RNA using the four ribonucleoside triphosphates as substrates. This is DNA-directed RNA polymerase subunit alpha from Methylobacterium sp. (strain 4-46).